The sequence spans 125 residues: Holo-[acyl-carrier-protein] synthase (125 aa).

Positions 7 and 56 each coordinate Mg(2+).

Belongs to the P-Pant transferase superfamily. AcpS family. Requires Mg(2+) as cofactor.

The protein resides in the cytoplasm. The catalysed reaction is apo-[ACP] + CoA = holo-[ACP] + adenosine 3',5'-bisphosphate + H(+). Its function is as follows. Transfers the 4'-phosphopantetheine moiety from coenzyme A to a Ser of acyl-carrier-protein. The polypeptide is Holo-[acyl-carrier-protein] synthase (Chlamydia muridarum (strain MoPn / Nigg)).